Reading from the N-terminus, the 352-residue chain is Holliday junction branch migration complex subunit RuvB (352 aa).

The tract at residues 1–26 is disordered; that stretch reads MIETDKLRAAAPERLISPQPADRQED. The large ATPase domain (RuvB-L) stretch occupies residues 4-193; it reads TDKLRAAAPE…FGIVSRLEFY (190 aa). ATP-binding positions include Leu32, Arg33, Gly74, Lys77, Thr78, Thr79, 140 to 142, Arg183, Tyr193, and Arg230; that span reads EDF. Thr78 serves as a coordination point for Mg(2+). Positions 194–264 are small ATPAse domain (RuvB-S); that stretch reads TPDELGFIVS…VADAALRMLD (71 aa). Residues 267–352 form a head domain (RuvB-H) region; the sequence is SLGLDLMDRK…RPGGTDLFGG (86 aa). Positions 322 and 327 each coordinate DNA.

This sequence belongs to the RuvB family. As to quaternary structure, homohexamer. Forms an RuvA(8)-RuvB(12)-Holliday junction (HJ) complex. HJ DNA is sandwiched between 2 RuvA tetramers; dsDNA enters through RuvA and exits via RuvB. An RuvB hexamer assembles on each DNA strand where it exits the tetramer. Each RuvB hexamer is contacted by two RuvA subunits (via domain III) on 2 adjacent RuvB subunits; this complex drives branch migration. In the full resolvosome a probable DNA-RuvA(4)-RuvB(12)-RuvC(2) complex forms which resolves the HJ.

It is found in the cytoplasm. The enzyme catalyses ATP + H2O = ADP + phosphate + H(+). The RuvA-RuvB-RuvC complex processes Holliday junction (HJ) DNA during genetic recombination and DNA repair, while the RuvA-RuvB complex plays an important role in the rescue of blocked DNA replication forks via replication fork reversal (RFR). RuvA specifically binds to HJ cruciform DNA, conferring on it an open structure. The RuvB hexamer acts as an ATP-dependent pump, pulling dsDNA into and through the RuvAB complex. RuvB forms 2 homohexamers on either side of HJ DNA bound by 1 or 2 RuvA tetramers; 4 subunits per hexamer contact DNA at a time. Coordinated motions by a converter formed by DNA-disengaged RuvB subunits stimulates ATP hydrolysis and nucleotide exchange. Immobilization of the converter enables RuvB to convert the ATP-contained energy into a lever motion, pulling 2 nucleotides of DNA out of the RuvA tetramer per ATP hydrolyzed, thus driving DNA branch migration. The RuvB motors rotate together with the DNA substrate, which together with the progressing nucleotide cycle form the mechanistic basis for DNA recombination by continuous HJ branch migration. Branch migration allows RuvC to scan DNA until it finds its consensus sequence, where it cleaves and resolves cruciform DNA. The chain is Holliday junction branch migration complex subunit RuvB from Azoarcus sp. (strain BH72).